Here is a 422-residue protein sequence, read N- to C-terminus: Nucleoprotein (422 aa).

2 stretches are compositionally biased toward polar residues: residues 1-12 and 22-31; these read MSDNGPQSNQRS and TDSTDNNQNG. Positions 1-52 are disordered; it reads MSDNGPQSNQRSAPRITFGGPTDSTDNNQNGGRNGARPKQRRPQGLPNNTAS. RNA-binding regions lie at residues 42 to 187 and 45 to 181; these read RPQG…SSRS and GLPN…RGGS. The region spanning 49 to 176 is the CoV N NTD domain; the sequence is NTASWFTALT…TLPKGFYAEG (128 aa). 3 residues coordinate RNA: Arg-93, Arg-108, and Arg-150. Disordered stretches follow at residues 167–214, 234–287, and 362–422; these read TLPK…MASG, KVSG…QGNF, and KTFP…STQA. Ser-177 is modified (phosphoserine; by host). Positions 177–204 are SR region; sequence SRGGSQASSRSSSRSRGNSRNSTPGSSR. Low complexity-rich tracts occupy residues 180 to 207 and 234 to 250; these read GSQA…RGNS and KVSG…VTKK. A CoV N CTD domain is found at 248-365; it reads TKKSAAEASK…KHIDAYKTFP (118 aa). The Nuclear localization signal signature appears at 257–265; sequence KKPRQKRTA. Residues 259-362 form a dimerization region; the sequence is PRQKRTATKQ…LLNKHIDAYK (104 aa). Positions 368–379 are enriched in basic and acidic residues; it reads EPKKDKKKKTDE. Positions 406–422 are enriched in polar residues; that stretch reads RQLQNSMSGASADSTQA.

It belongs to the betacoronavirus nucleocapsid protein family. Homooligomer. Both monomeric and oligomeric forms interact with RNA. Interacts with protein M. Interacts with protein E. May bind to host HNRNPA1. Interacts with NSP3; this interaction serves to tether the genome to the newly translated replicase-transcriptase complex at a very early stage of infection. May interact with host SMAD3. Interacts with host PPIA/CYPA. In terms of processing, proteolytically cleaved by host CASP6. The cleavage leads to two fragments and facilitates viral replication by inhibiting host IFN signaling. The two fragments may interact with IRF3 inhibiting its nuclear translocation after activation and reduce the expression of IFNB and IFN-stimulated genes. ADP-ribosylated. The ADP-ribosylation is retained in the virion during infection. Post-translationally, phosphorylated on serine and threonine residues. Phosphorylated by host GSK3A and GSK3B. Phosphorylation allows recruitment of host RNA helicase DDX1 which facilitates template readthrough and enables longer subgenomic mRNA synthesis. This promotes the solubility of homodimers that would otherwise aggregate. Host phosphatase would dephosphorylate the protein during assembly at M bound membranes.

Its subcellular location is the virion. The protein resides in the host endoplasmic reticulum-Golgi intermediate compartment. It is found in the host Golgi apparatus. The protein localises to the host cytoplasm. It localises to the host perinuclear region. Its subcellular location is the host nucleus. Packages the positive strand viral genome RNA into a helical ribonucleocapsid (RNP) and plays a fundamental role during virion assembly through its interactions with the viral genome and membrane protein M. Plays an important role in enhancing the efficiency of subgenomic viral RNA transcription as well as viral replication. May modulate transforming growth factor-beta signaling by binding host SMAD3. The chain is Nucleoprotein from Severe acute respiratory syndrome coronavirus (SARS-CoV).